The primary structure comprises 470 residues: Sulfate adenylyltransferase subunit 1 (470 aa).

The region spanning 22-236 is the tr-type G domain; the sequence is KELLRFITCG…YLETIKIDYA (215 aa). Residues 31–38 form a G1 region; that stretch reads GSVDDGKS. 31 to 38 serves as a coordination point for GTP; that stretch reads GSVDDGKS. The G2 stretch occupies residues 89–93; that stretch reads GITID. The tract at residues 110-113 is G3; the sequence is DTPG. GTP-binding positions include 110–114 and 165–168; these read DTPGH and NKMD. A G4 region spans residues 165–168; it reads NKMD. Positions 202–204 are G5; that stretch reads SAL.

The protein belongs to the TRAFAC class translation factor GTPase superfamily. Classic translation factor GTPase family. CysN/NodQ subfamily. As to quaternary structure, heterodimer composed of CysD, the smaller subunit, and CysN.

The enzyme catalyses sulfate + ATP + H(+) = adenosine 5'-phosphosulfate + diphosphate. It participates in sulfur metabolism; hydrogen sulfide biosynthesis; sulfite from sulfate: step 1/3. Functionally, with CysD forms the ATP sulfurylase (ATPS) that catalyzes the adenylation of sulfate producing adenosine 5'-phosphosulfate (APS) and diphosphate, the first enzymatic step in sulfur assimilation pathway. APS synthesis involves the formation of a high-energy phosphoric-sulfuric acid anhydride bond driven by GTP hydrolysis by CysN coupled to ATP hydrolysis by CysD. The chain is Sulfate adenylyltransferase subunit 1 from Francisella tularensis subsp. novicida (strain U112).